The primary structure comprises 290 residues: ATP synthase gamma chain (290 aa).

Belongs to the ATPase gamma chain family. F-type ATPases have 2 components, CF(1) - the catalytic core - and CF(0) - the membrane proton channel. CF(1) has five subunits: alpha(3), beta(3), gamma(1), delta(1), epsilon(1). CF(0) has three main subunits: a, b and c.

The protein localises to the cell inner membrane. In terms of biological role, produces ATP from ADP in the presence of a proton gradient across the membrane. The gamma chain is believed to be important in regulating ATPase activity and the flow of protons through the CF(0) complex. This chain is ATP synthase gamma chain, found in Bacteroides fragilis (strain YCH46).